Reading from the N-terminus, the 160-residue chain is ATP synthase subunit b (160 aa).

Residues 15–35 (LAIVIGVLFWFLRGFLGGILE) traverse the membrane as a helical segment.

It belongs to the ATPase B chain family. In terms of assembly, F-type ATPases have 2 components, F(1) - the catalytic core - and F(0) - the membrane proton channel. F(1) has five subunits: alpha(3), beta(3), gamma(1), delta(1), epsilon(1). F(0) has four main subunits: a(1), b(1), b'(1) and c(10-14). The alpha and beta chains form an alternating ring which encloses part of the gamma chain. F(1) is attached to F(0) by a central stalk formed by the gamma and epsilon chains, while a peripheral stalk is formed by the delta, b and b' chains.

The protein localises to the cellular thylakoid membrane. In terms of biological role, f(1)F(0) ATP synthase produces ATP from ADP in the presence of a proton or sodium gradient. F-type ATPases consist of two structural domains, F(1) containing the extramembraneous catalytic core and F(0) containing the membrane proton channel, linked together by a central stalk and a peripheral stalk. During catalysis, ATP synthesis in the catalytic domain of F(1) is coupled via a rotary mechanism of the central stalk subunits to proton translocation. Functionally, component of the F(0) channel, it forms part of the peripheral stalk, linking F(1) to F(0). The polypeptide is ATP synthase subunit b (Synechococcus sp. (strain CC9902)).